The sequence spans 314 residues: tRNA dimethylallyltransferase (314 aa).

ATP is bound at residue 9 to 16 (GPTAVGKT). A substrate-binding site is contributed by 11–16 (TAVGKT). Residues 34-37 (DSVQ) are interaction with substrate tRNA.

It belongs to the IPP transferase family. As to quaternary structure, monomer. Requires Mg(2+) as cofactor.

The catalysed reaction is adenosine(37) in tRNA + dimethylallyl diphosphate = N(6)-dimethylallyladenosine(37) in tRNA + diphosphate. Catalyzes the transfer of a dimethylallyl group onto the adenine at position 37 in tRNAs that read codons beginning with uridine, leading to the formation of N6-(dimethylallyl)adenosine (i(6)A). This chain is tRNA dimethylallyltransferase, found in Desulfitobacterium hafniense (strain Y51).